The sequence spans 367 residues: Aflatoxin B1 aldehyde reductase member 2 (367 aa).

Residues 1 to 31 show a composition bias toward low complexity; sequence MLRAASRAVGRAAVRSAQRSGTSVGRPLAMS. A disordered region spans residues 1–45; sequence MLRAASRAVGRAAVRSAQRSGTSVGRPLAMSRPPPPRAASGAPLR. Residues 1 to 46 constitute a mitochondrion transit peptide; that stretch reads MLRAASRAVGRAAVRSAQRSGTSVGRPLAMSRPPPPRAASGAPLRP. Serine 40 is subject to Phosphoserine. Phosphothreonine is present on threonine 48. Position 80 (aspartate 80) interacts with NADP(+). Tyrosine 85 functions as the Proton donor in the catalytic mechanism. Lysine 136 carries the N6-acetyllysine modification. A substrate-binding site is contributed by histidine 149. Residues 179–180, glutamine 205, 234–244, and arginine 258 contribute to the NADP(+) site; these read SN and NPLAGGLLTGK. N6-succinyllysine is present on lysine 244. Tyrosine 268 and arginine 271 together coordinate substrate. Residue 326-334 participates in NADP(+) binding; that stretch reads SSLEQLEQN. Arginine 367 provides a ligand contact to substrate.

This sequence belongs to the aldo/keto reductase family. Aldo/keto reductase 2 subfamily. Homodimer. Expressed in liver, kidney, testis and brain with low levels in skeletal muscle, spleen, heart and lung.

The protein localises to the mitochondrion. It is found in the golgi apparatus. The protein resides in the cytoplasm. The catalysed reaction is 4-hydroxybutanoate + NADP(+) = succinate semialdehyde + NADPH + H(+). Its activity is regulated as follows. Inhibited by citrate, succinate and tartrate. Functionally, catalyzes the NADPH-dependent reduction of succinic semialdehyde to gamma-hydroxybutyrate. May have an important role in producing the neuromodulator gamma-hydroxybutyrate (GHB). Has broad substrate specificity. Can reduce the dialdehyde protein-binding form of aflatoxin B1 (AFB1) to the non-binding AFB1 dialcohol. May be involved in protection of liver against the toxic and carcinogenic effects of AFB1, a potent hepatocarcinogen. In Mus musculus (Mouse), this protein is Aflatoxin B1 aldehyde reductase member 2.